Consider the following 268-residue polypeptide: Ribonuclease P protein subunit p30 (268 aa).

Ala2 bears the N-acetylalanine mark. Position 251 is a phosphoserine (Ser251).

This sequence belongs to the eukaryotic/archaeal RNase P protein component 3 family. As to quaternary structure, component of nuclear RNase P and RNase MRP ribonucleoproteins. RNase P consists of a catalytic RNA moiety and about 10 protein subunits; POP1, POP4, POP5, POP7, RPP14, RPP21, RPP25, RPP30, RPP38 and RPP40. Within the RNase P complex, POP1, POP7 and RPP25 form the 'finger' subcomplex, POP5, RPP14, RPP40 and homodimeric RPP30 form the 'palm' subcomplex, and RPP21, POP4 and RPP38 form the 'wrist' subcomplex. All subunits of the RNase P complex interact with the catalytic RNA. Several subunits of RNase P are also part of the RNase MRP complex. RNase MRP consists of a catalytic RNA moiety and about 8 protein subunits; POP1, POP7, RPP25, RPP30, RPP38, RPP40 and possibly also POP4 and POP5.

The protein resides in the nucleus. It is found in the nucleolus. Component of ribonuclease P, a ribonucleoprotein complex that generates mature tRNA molecules by cleaving their 5'-ends. Also a component of the MRP ribonuclease complex, which cleaves pre-rRNA sequences. This chain is Ribonuclease P protein subunit p30 (Rpp30), found in Mus musculus (Mouse).